We begin with the raw amino-acid sequence, 320 residues long: Glycerol-3-phosphate dehydrogenase [NAD(P)+] (320 aa).

NADPH contacts are provided by F11, R30, and K102. The sn-glycerol 3-phosphate site is built by K102, G130, and S132. A134 provides a ligand contact to NADPH. 5 residues coordinate sn-glycerol 3-phosphate: K185, D238, S248, R249, and N250. K185 functions as the Proton acceptor in the catalytic mechanism. An NADPH-binding site is contributed by R249. E270 is an NADPH binding site.

This sequence belongs to the NAD-dependent glycerol-3-phosphate dehydrogenase family.

The protein localises to the cytoplasm. It catalyses the reaction sn-glycerol 3-phosphate + NAD(+) = dihydroxyacetone phosphate + NADH + H(+). The catalysed reaction is sn-glycerol 3-phosphate + NADP(+) = dihydroxyacetone phosphate + NADPH + H(+). Its pathway is membrane lipid metabolism; glycerophospholipid metabolism. Functionally, catalyzes the reduction of the glycolytic intermediate dihydroxyacetone phosphate (DHAP) to sn-glycerol 3-phosphate (G3P), the key precursor for phospholipid synthesis. This Ruegeria sp. (strain TM1040) (Silicibacter sp.) protein is Glycerol-3-phosphate dehydrogenase [NAD(P)+].